Consider the following 57-residue polypeptide: Large ribosomal subunit protein bL32 (57 aa).

Positions 1–20 (MAVQQRRSSKHRRDKRRSHD) are disordered. Residues 7–18 (RSSKHRRDKRRS) are compositionally biased toward basic residues.

Belongs to the bacterial ribosomal protein bL32 family.

The protein is Large ribosomal subunit protein bL32 (rpmF) of Mycoplasma genitalium (strain ATCC 33530 / DSM 19775 / NCTC 10195 / G37) (Mycoplasmoides genitalium).